Here is a 226-residue protein sequence, read N- to C-terminus: uncharacterized protein (226 aa).

It belongs to the HisA/HisF family.

This is an uncharacterized protein from Methanocaldococcus jannaschii (strain ATCC 43067 / DSM 2661 / JAL-1 / JCM 10045 / NBRC 100440) (Methanococcus jannaschii).